A 626-amino-acid polypeptide reads, in one-letter code: Dynein, cytoplasmic 1, intermediate chain 2a (626 aa).

The span at 20 to 43 shows a compositional bias: basic and acidic residues; sequence QIREEKKRKEEERKKKEAELKKDA. Disordered regions lie at residues 20–108 and 142–197; these read QIRE…RTLH and KEVV…HELT. The span at 82 to 99 shows a compositional bias: polar residues; sequence TAKSVGSPSEAGSQDSGD. The segment covering 160–169 has biased composition (acidic residues); that stretch reads KDEEDEEEET. The segment covering 177 to 197 has biased composition (basic and acidic residues); the sequence is ETEKEKPEEKQVEEALPHELT. 7 WD repeats span residues 265–314, 318–358, 367–408, 417–457, 462–507, 510–550, and 556–595; these read SKQR…ATPE, HCQS…RTPV, AHTH…QPQD, SKSV…AGIS, GHHG…PLYS, DNSD…EVPT, and DGSP…AVPR.

The protein belongs to the dynein intermediate chain family. Homodimer. The cytoplasmic dynein 1 complex consists of two catalytic heavy chains (HCs) and a number of non-catalytic subunits presented by intermediate chains (ICs), light intermediate chains (LICs) and light chains (LCs); the composition seems to vary in respect to the IC, LIC and LC composition. The heavy chain homodimer serves as a scaffold for the probable homodimeric assembly of the respective non-catalytic subunits. The ICs and LICs bind directly to the HC dimer and the LCs assemble on the IC dimer.

It is found in the cytoplasm. The protein resides in the cytoskeleton. Its function is as follows. Acts as one of several non-catalytic accessory components of the cytoplasmic dynein 1 complex that are thought to be involved in linking dynein to cargos and to adapter proteins that regulate dynein function. Cytoplasmic dynein 1 acts as a motor for the intracellular retrograde motility of vesicles and organelles along microtubules. Plays a role in the development of anterior brain and cartilaginous structures. This Danio rerio (Zebrafish) protein is Dynein, cytoplasmic 1, intermediate chain 2a (dync1i2a).